Consider the following 165-residue polypeptide: UPF0303 protein Bphyt_1734 (165 aa).

Belongs to the UPF0303 family.

This Paraburkholderia phytofirmans (strain DSM 17436 / LMG 22146 / PsJN) (Burkholderia phytofirmans) protein is UPF0303 protein Bphyt_1734.